Consider the following 203-residue polypeptide: Molybdenum cofactor guanylyltransferase (203 aa).

Residues 20 to 22 (LAG), lysine 33, asparagine 61, aspartate 78, and aspartate 108 contribute to the GTP site. Aspartate 108 is a binding site for Mg(2+).

It belongs to the MobA family. As to quaternary structure, monomer. It depends on Mg(2+) as a cofactor.

The protein localises to the cytoplasm. It carries out the reaction Mo-molybdopterin + GTP + H(+) = Mo-molybdopterin guanine dinucleotide + diphosphate. Its function is as follows. Transfers a GMP moiety from GTP to Mo-molybdopterin (Mo-MPT) cofactor (Moco or molybdenum cofactor) to form Mo-molybdopterin guanine dinucleotide (Mo-MGD) cofactor. In Vibrio cholerae serotype O1 (strain ATCC 39315 / El Tor Inaba N16961), this protein is Molybdenum cofactor guanylyltransferase.